A 480-amino-acid polypeptide reads, in one-letter code: MNLDHSYATHLGDLGALTKPLRVANPQLVEVNHTLRDALQLPASWFTQSSIMSMLFGNTSSFTTHSFAQKYGGHQFGGWNPDLGDGRGVLLGEAKDKFGKSWDLHLKGAGPTPYSRFADGRAVLRSTLREYLASEALHHMGIPTSRALCLITSDEPVYREKQEKAAMMIRVSQSHIRFGHFEYFYHNGELDKLKRLFDYCFEHHFSACLHSESPHLAMLEKIVTDTATLIAKWQAYGFNHGVMNTDNMSIHGITFDFGPYAFLDDFNPKFVCNHSDHRGRYAFEQQPSVGLWNLNALAHAFTPYLSVEQIKGALSQYEASLMAEFSQLMRQKLGLYENTQNTAELVNRWLDLIYQDKRDYHISFRLLCEVDEHGENQPLVDHFIQRDTAKTWLEHYQNALITQGVKRQERQANMRNINPEYVLRNYQAQLAIDAAQNGDFSRFRKLLHVLQHPFESKPEYAEFAKPPPNWGKHMEISCSS.

Positions 84, 86, 87, 107, 119, 120, 170, and 177 each coordinate ATP. Residue D246 is the Proton acceptor of the active site. Mg(2+)-binding residues include N247 and D256. Residue D256 coordinates ATP.

The protein belongs to the SELO family. Requires Mg(2+) as cofactor. It depends on Mn(2+) as a cofactor.

It catalyses the reaction L-seryl-[protein] + ATP = 3-O-(5'-adenylyl)-L-seryl-[protein] + diphosphate. The enzyme catalyses L-threonyl-[protein] + ATP = 3-O-(5'-adenylyl)-L-threonyl-[protein] + diphosphate. The catalysed reaction is L-tyrosyl-[protein] + ATP = O-(5'-adenylyl)-L-tyrosyl-[protein] + diphosphate. It carries out the reaction L-histidyl-[protein] + UTP = N(tele)-(5'-uridylyl)-L-histidyl-[protein] + diphosphate. It catalyses the reaction L-seryl-[protein] + UTP = O-(5'-uridylyl)-L-seryl-[protein] + diphosphate. The enzyme catalyses L-tyrosyl-[protein] + UTP = O-(5'-uridylyl)-L-tyrosyl-[protein] + diphosphate. Its function is as follows. Nucleotidyltransferase involved in the post-translational modification of proteins. It can catalyze the addition of adenosine monophosphate (AMP) or uridine monophosphate (UMP) to a protein, resulting in modifications known as AMPylation and UMPylation. The sequence is that of Protein nucleotidyltransferase YdiU from Pseudoalteromonas atlantica (strain T6c / ATCC BAA-1087).